We begin with the raw amino-acid sequence, 639 residues long: Serine/threonine-protein kinase PAK mbt (639 aa).

The 14-residue stretch at 11 to 24 (ISMPSNFEHRVHTG) folds into the CRIB domain. The linker stretch occupies residues 25–367 (FDKRENKYVG…VVSAGDPREN (343 aa)). Disordered stretches follow at residues 79 to 195 (HHNN…SLLY) and 222 to 345 (RSNL…QDQR). Composition is skewed to low complexity over residues 91-129 (NSSSTMMMGSMAPMNPMAPGAHPMMSHGPGMMMPPETGG), 138-159 (VARSNSLRSSSPPRVRRVANVP), 227-241 (PPSGGSMPQQQQTSP), and 274-295 (QQQQQQQQQAKQGGDQNQNPLH). The span at 296–308 (PHAHPHPHHHQHL) shows a compositional bias: basic residues. Residues 309-331 (AKSASRASSSSGGASSAAQQASG) show a composition bias toward low complexity. In terms of domain architecture, Protein kinase spans 368–619 (LDHFNKIGEG…AAELLAHPFL (252 aa)). Residues 374 to 382 (IGEGSTGTV) and lysine 397 contribute to the ATP site. Aspartate 487 (proton acceptor) is an active-site residue. Residue serine 521 is modified to Phosphoserine. The residue at position 525 (threonine 525) is a Phosphothreonine.

Belongs to the protein kinase superfamily. STE Ser/Thr protein kinase family. STE20 subfamily. Interacts tightly with GTP-bound but not GDP-bound Cdc42 and weakly with Rac1. The cofactor is Mg(2+). Autophosphorylated when activated by Cdc42. Expressed in adult brain and eye. High levels detected in developing photoreceptor cells and future bristle cells, and lower levels in cone and pigment cells, as detected in third instar eye imaginal disks (at protein level).

Its subcellular location is the cell junction. The protein localises to the adherens junction. It localises to the cell membrane. The enzyme catalyses L-seryl-[protein] + ATP = O-phospho-L-seryl-[protein] + ADP + H(+). The catalysed reaction is L-threonyl-[protein] + ATP = O-phospho-L-threonyl-[protein] + ADP + H(+). In terms of biological role, involved in neurogenesis of the adult central nervous system, and together with Cdc42, regulates photoreceptor cell morphogenesis. Phosphorylates exogenous substrates when activated by Cdc42. The protein is Serine/threonine-protein kinase PAK mbt of Drosophila melanogaster (Fruit fly).